We begin with the raw amino-acid sequence, 768 residues long: Probable LRR receptor-like serine/threonine-protein kinase At4g37250 (768 aa).

Positions 1–21 (MRMELISVIFFFFCSVLSSSA) are cleaved as a signal peptide. Topologically, residues 22–328 (LNSDGLVLMK…PNPRTGLRPG (307 aa)) are extracellular. N-linked (GlcNAc...) asparagine glycosylation occurs at Asn-64. LRR repeat units follow at residues 67–90 (KVLT…GSLL), 91–112 (TLQS…SFFN), 115–137 (ELRF…IGDL), 139–162 (NLLT…ASLR), 163–183 (NLTV…GGWR), 184–206 (VVEF…FGGY), 207–229 (SLQY…IGVN), and 232–254 (RNVT…PVFL). Residue Asn-99 is glycosylated (N-linked (GlcNAc...) asparagine). Residues Asn-144, Asn-163, Asn-196, Asn-212, Asn-233, and Asn-242 are each glycosylated (N-linked (GlcNAc...) asparagine). Residues 301–324 (PNTIGSNPVTDPNSQQTDPNPRTG) are disordered. Positions 303–320 (TIGSNPVTDPNSQQTDPN) are enriched in polar residues. Residues 329–349 (VIIGIVVGDIAGIGILAVIFL) form a helical membrane-spanning segment. Over 350–768 (YIYRCKKNKI…IKSSSFHYGH (419 aa)) the chain is Cytoplasmic. Residues 361–432 (DNNNNDKQRT…NANQRSGDNK (72 aa)) are disordered. Residues 378-387 (STFSSSSSSP) show a composition bias toward low complexity. Residues 407-420 (PSEEEDEDDEDEES) are compositionally biased toward acidic residues. The Protein kinase domain occupies 449–756 (KASAYILGAT…AVLERFHPNS (308 aa)). Phosphoserine occurs at positions 451 and 531. Thr-553 carries the post-translational modification Phosphothreonine. Ser-662 carries the post-translational modification Phosphoserine.

Belongs to the protein kinase superfamily. Ser/Thr protein kinase family.

It localises to the membrane. The catalysed reaction is L-seryl-[protein] + ATP = O-phospho-L-seryl-[protein] + ADP + H(+). The enzyme catalyses L-threonyl-[protein] + ATP = O-phospho-L-threonyl-[protein] + ADP + H(+). The chain is Probable LRR receptor-like serine/threonine-protein kinase At4g37250 from Arabidopsis thaliana (Mouse-ear cress).